A 276-amino-acid polypeptide reads, in one-letter code: Tryptophan synthase alpha chain (276 aa).

Residues E49 and D60 each act as proton acceptor in the active site.

This sequence belongs to the TrpA family. As to quaternary structure, tetramer of two alpha and two beta chains.

It catalyses the reaction (1S,2R)-1-C-(indol-3-yl)glycerol 3-phosphate + L-serine = D-glyceraldehyde 3-phosphate + L-tryptophan + H2O. It participates in amino-acid biosynthesis; L-tryptophan biosynthesis; L-tryptophan from chorismate: step 5/5. In terms of biological role, the alpha subunit is responsible for the aldol cleavage of indoleglycerol phosphate to indole and glyceraldehyde 3-phosphate. This Acidiphilium cryptum (strain JF-5) protein is Tryptophan synthase alpha chain.